The sequence spans 59 residues: Movement protein TGBp3 (59 aa).

Over M1 to L3 the chain is Lumenal. The helical transmembrane segment at A4 to T21 threads the bilayer. Residues T22 to G59 are Cytoplasmic-facing.

Belongs to the Tymovirales TGBp3 protein family.

The protein resides in the host endoplasmic reticulum membrane. Its function is as follows. Plays a role in viral cell-to-cell propagation, by facilitating genome transport to neighboring plant cells through plasmosdesmata. May induce the formation of granular vesicles derived from the Endoplasmic reticulum, which align on actin filaments. This Chenopodium album (Fat hen) protein is Movement protein TGBp3.